A 168-amino-acid chain; its full sequence is Small ribosomal subunit protein bS6 (168 aa).

Positions 103–168 (RQAIAEEKEK…AAADKSDDNA (66 aa)) are disordered. A compositionally biased stretch (basic and acidic residues) spans 106–115 (IAEEKEKKAE). Residues 116-125 (GQAAADAAPA) are compositionally biased toward low complexity.

This sequence belongs to the bacterial ribosomal protein bS6 family.

In terms of biological role, binds together with bS18 to 16S ribosomal RNA. In Desulfosudis oleivorans (strain DSM 6200 / JCM 39069 / Hxd3) (Desulfococcus oleovorans), this protein is Small ribosomal subunit protein bS6.